A 315-amino-acid chain; its full sequence is MNKMNRLSHNTEIRNAIYSGVGIGISGNSFLLLFHIFKYIRGQRSRHIDLPIGLLSLIHLVMLIAMSLVATDIFMPWGRWGDTTCKCVISLYRFCRSLSLCATSLLSILQAVTLNPRNSCLEKFKRKSPHYMLGCLLFLSVFYTFISSPLATYITAKSNLTSPSFTYITTSCSLAPMSYSFHLTVFILLTSRDVIFVGLMLLSSGYMVTFLGRHKKQSQFLHITSFSLKPSAEKRAMRTILCLMSFFVLMYTLDSIVSYIRSIDDGQIFYCVHIFTAHGYATVSPFLILSTEKYIINIFRSTFGRMVTIILLRNR.

The Extracellular segment spans residues 1-15 (MNKMNRLSHNTEIRN). The chain crosses the membrane as a helical span at residues 16 to 40 (AIYSGVGIGISGNSFLLLFHIFKYI). At 41–51 (RGQRSRHIDLP) the chain is on the cytoplasmic side. The chain crosses the membrane as a helical span at residues 52–71 (IGLLSLIHLVMLIAMSLVAT). Over 72–90 (DIFMPWGRWGDTTCKCVIS) the chain is Extracellular. A disulfide bond links Cys-85 and Cys-172. A helical membrane pass occupies residues 91 to 112 (LYRFCRSLSLCATSLLSILQAV). The Cytoplasmic segment spans residues 113-132 (TLNPRNSCLEKFKRKSPHYM). The chain crosses the membrane as a helical span at residues 133–154 (LGCLLFLSVFYTFISSPLATYI). Over 155-193 (TAKSNLTSPSFTYITTSCSLAPMSYSFHLTVFILLTSRD) the chain is Extracellular. Residues 194 to 212 (VIFVGLMLLSSGYMVTFLG) traverse the membrane as a helical segment. Over 213–239 (RHKKQSQFLHITSFSLKPSAEKRAMRT) the chain is Cytoplasmic. Residues 240 to 260 (ILCLMSFFVLMYTLDSIVSYI) traverse the membrane as a helical segment. Over 261-267 (RSIDDGQ) the chain is Extracellular. The helical transmembrane segment at 268 to 288 (IFYCVHIFTAHGYATVSPFLI) threads the bilayer. Topologically, residues 289–315 (LSTEKYIINIFRSTFGRMVTIILLRNR) are cytoplasmic.

This sequence belongs to the G-protein coupled receptor 1 family.

The protein localises to the cell membrane. Putative pheromone receptor implicated in the regulation of social and reproductive behavior. The sequence is that of Vomeronasal type-1 receptor 54 (Vmn1r54) from Mus musculus (Mouse).